The primary structure comprises 151 residues: UPF0178 protein Tcr_1995 (151 aa).

The disordered stretch occupies residues 116 to 135 (RSSGVDTGGPPPLNQKDRQA).

The protein belongs to the UPF0178 family.

The sequence is that of UPF0178 protein Tcr_1995 from Hydrogenovibrio crunogenus (strain DSM 25203 / XCL-2) (Thiomicrospira crunogena).